The sequence spans 266 residues: Hemin import ATP-binding protein HmuV (266 aa).

Positions 12–248 (LEANQLSYHV…ETLTRWYQAD (237 aa)) constitute an ABC transporter domain. 44 to 51 (GPNGAGKS) is a binding site for ATP.

This sequence belongs to the ABC transporter superfamily. Heme (hemin) importer (TC 3.A.1.14.5) family. The complex is composed of two ATP-binding proteins (HmuV), two transmembrane proteins (HmuU) and a solute-binding protein (HmuT).

It localises to the cell inner membrane. In terms of biological role, part of the ABC transporter complex HmuTUV involved in hemin import. Responsible for energy coupling to the transport system. This is Hemin import ATP-binding protein HmuV from Yersinia enterocolitica.